Reading from the N-terminus, the 240-residue chain is Homeobox protein DLX-4 (240 aa).

Disordered stretches follow at residues 44-70 (DLSY…DSYL) and 175-194 (LKQS…PSLS). The homeobox DNA-binding region spans 116–175 (LRKPRTIYSSLQLQHLNQRFQHTQYLALPERAQLAAQLGLTQTQVKIWFQNKRSKYKKLL).

It belongs to the distal-less homeobox family. As to expression, branchial arches, molar and incisor teeth and limbs.

It localises to the nucleus. Functionally, may play a role in determining the production of hemoglobin S. May act as a repressor. During embryonic development, plays a role in palatogenesis. The protein is Homeobox protein DLX-4 (Dlx4) of Mus musculus (Mouse).